Here is a 2171-residue protein sequence, read N- to C-terminus: Voltage-dependent L-type calcium channel subunit alpha-1C (2171 aa).

The Cytoplasmic segment spans residues 1 to 154; it reads MLRALVQPAT…RACISIVEWK (154 aa). The interval 77 to 98 is calmodulin-binding; sequence GAALSWQAAIDAARQAKLMGSA. Positions 103–128 are disordered; that stretch reads ISTVSSTQRKRQQYGKPKKQGSTTAT. Over residues 110-121 the composition is skewed to basic residues; that stretch reads QRKRQQYGKPKK. The stretch at 141-438 is one I repeat; sequence NPIRRACISI…LVLGVLSGEF (298 aa). A helical membrane pass occupies residues 155–173; that stretch reads PFEIIILLTIFANCVALAI. Over 174–188 the chain is Extracellular; sequence YIPFPEDDSNATNSN. Residue Asn183 is glycosylated (N-linked (GlcNAc...) asparagine). Residues 189-209 form a helical membrane-spanning segment; it reads LERVEYLFLIIFTVEAFLKVI. Topologically, residues 210–218 are cytoplasmic; the sequence is AYGLLFHPN. The helical transmembrane segment at 219–239 threads the bilayer; it reads AYLRNGWNLLDFIIVVVGLFS. Topologically, residues 240–262 are extracellular; sequence AILEQATKADGANALGGKGAGFD. Residues 263–281 traverse the membrane as a helical segment; the sequence is VKALRAFRVLRPLRLVSGV. At 282–298 the chain is on the cytoplasmic side; it reads PSLQVVLNSIIKAMVPL. A helical transmembrane segment spans residues 299–320; sequence LHIALLVLFVIIIYAIIGLELF. Topologically, residues 321-380 are extracellular; sequence MGKMHKTCYNQEGVADVPAEDDPSPCALETGHGRQCQNGTVCKPGWDGPKHGITNFDNFA. Intrachain disulfides connect Cys328-Cys356 and Cys346-Cys362. N-linked (GlcNAc...) asparagine glycosylation occurs at Asn358. An intramembrane region (pore-forming) is located at residues 381–402; it reads FAMLTVFQCITMEGWTDVLYWM. A Selectivity filter of repeat I motif is present at residues 391 to 394; sequence TMEG. Glu393 contributes to the Ca(2+) binding site. Over 403–410 the chain is Extracellular; it reads QDAMGYEL. A helical transmembrane segment spans residues 411 to 431; sequence PWVYFVSLVIFGSFFVLNLVL. The Cytoplasmic segment spans residues 432–554; that stretch reads GVLSGEFSKE…RKCRAAVKSN (123 aa). The AID/alpha-interaction domain; mediates interaction with the beta subunit stretch occupies residues 458–475; sequence QQLEEDLKGYLDWITQAE. The segment at 479 to 511 is disordered; it reads PENEDEGMDEEKPRNMSMPTSETESVNTENVAG. The segment covering 495–508 has biased composition (polar residues); the sequence is SMPTSETESVNTEN. Ser499 carries the post-translational modification Phosphoserine. Thr506 carries the post-translational modification Phosphothreonine. The stretch at 540 to 786 is one II repeat; the sequence is NRFCRRKCRA…VFLAIAVDNL (247 aa). The helical transmembrane segment at 555-573 threads the bilayer; sequence VFYWLVIFLVFLNTLTIAS. The Extracellular portion of the chain corresponds to 574–584; the sequence is EHYNQPHWLTE. A helical membrane pass occupies residues 585–605; sequence VQDTANKALLALFTAEMLLKM. The Cytoplasmic portion of the chain corresponds to 606-616; the sequence is YSLGLQAYFVS. A helical membrane pass occupies residues 617 to 636; it reads LFNRFDCFIVCGGILETILV. Over 637–645 the chain is Extracellular; that stretch reads ETKVMSPLG. Residues 646–664 form a helical membrane-spanning segment; the sequence is ISVLRCVRLLRIFKITRYW. Residues 665 to 683 lie on the Cytoplasmic side of the membrane; it reads NSLSNLVASLLNSVRSIAS. A helical membrane pass occupies residues 684 to 703; that stretch reads LLLLLFLFIIIFSLLGMQLF. The Extracellular segment spans residues 704–723; that stretch reads GGKFNFDEMQTRRSTFDNFP. Positions 724 to 745 form an intramembrane region, pore-forming; it reads QSLLTVFQILTGEDWNSVMYDG. The Selectivity filter of repeat II signature appears at 734–737; the sequence is TGED. Glu736 is a binding site for Ca(2+). At 746–755 the chain is on the extracellular side; the sequence is IMAYGGPSFP. Residues 756–775 traverse the membrane as a helical segment; it reads GMLVCIYFIILFICGNYILL. Residues 776–930 are Cytoplasmic-facing; it reads NVFLAIAVDN…LQCHRIVNDT (155 aa). The tract at residues 794-891 is disordered; the sequence is SAQKEEEEEK…EMPVGPRPRP (98 aa). The span at 813 to 836 shows a compositional bias: basic and acidic residues; that stretch reads SPEKKQEVVGKPALEEAKEEKIEL. A phosphoserine mark is found at Ser838 and Ser845. The segment at 859–906 is interaction with STAC2; sequence NESEDKSPYPNPETTGEEDEEEPEMPVGPRPRPLSELHLKEKAVPMPE. Acidic residues predominate over residues 873 to 882; the sequence is TGEEDEEEPE. An III repeat occupies 917-1199; it reads NRFRLQCHRI…IFVGFVIVTF (283 aa). The chain crosses the membrane as a helical span at residues 931–949; it reads IFTNLILFFILLSSISLAA. The Extracellular segment spans residues 950–961; the sequence is EDPVQHTSFRNH. Residues 962–981 form a helical membrane-spanning segment; that stretch reads ILFYFDIVFTTIFTIEIALK. Residues 982-997 are Cytoplasmic-facing; it reads MTAYGAFLHKGSFCRN. The helical transmembrane segment at 998–1016 threads the bilayer; the sequence is YFNILDLLVVSVSLISFGI. Residues 1017–1023 are Extracellular-facing; it reads QSSAINV. The chain crosses the membrane as a helical span at residues 1024–1042; that stretch reads VKILRVLRVLRPLRAINRA. Over 1043–1061 the chain is Cytoplasmic; that stretch reads KGLKHVVQCVFVAIRTIGN. The helical transmembrane segment at 1062 to 1081 threads the bilayer; that stretch reads IVIVTTLLQFMFACIGVQLF. The Extracellular segment spans residues 1082-1131; sequence KGKLYTCSDSSKQTEAECKGNYITYKDGEVDHPIIQPRSWENSKFDFDNV. A disulfide bond links Cys1088 and Cys1099. The dihydropyridine binding stretch occupies residues 1119–1208; that stretch reads RSWENSKFDF…FQEQGEQEYK (90 aa). Residues 1132–1152 constitute an intramembrane region (pore-forming); that stretch reads LAAMMALFTVSTFEGWPELLY. The Selectivity filter of repeat III signature appears at 1143-1146; that stretch reads TFEG. Position 1145 (Glu1145) interacts with Ca(2+). At 1153-1169 the chain is on the extracellular side; the sequence is RSIDSHTEDKGPIYNYR. Residues 1170 to 1191 form a helical membrane-spanning segment; the sequence is VEISIFFIIYIIIIAFFMMNIF. Over 1192 to 1249 the chain is Cytoplasmic; sequence VGFVIVTFQEQGEQEYKNCELDKNQRQCVEYALKARPLRRYIPKNQHQYKVWYVVNST. An IV repeat occupies 1236-1509; the sequence is NQHQYKVWYV…LFVAVIMDNF (274 aa). A helical transmembrane segment spans residues 1250–1271; the sequence is YFEYLMFVLILLNTICLAMQHY. Residues 1272-1279 are Extracellular-facing; it reads GQSCLFKI. Residues 1280-1301 form a helical membrane-spanning segment; the sequence is AMNILNMLFTGLFTVEMILKLI. Over 1302-1311 the chain is Cytoplasmic; that stretch reads AFKPKGYFSD. A helical transmembrane segment spans residues 1312-1331; sequence PWNVFDFLIVIGSIIDVILS. Topologically, residues 1332–1354 are extracellular; sequence ETNPAEHTQCSPSMNAEENSRIS. Residues 1355 to 1373 traverse the membrane as a helical segment; it reads ITFFRLFRVMRLVKLLSRG. Residues 1374 to 1391 lie on the Cytoplasmic side of the membrane; the sequence is EGIRTLLWTFIKSFQALP. Residues 1392–1412 traverse the membrane as a helical segment; the sequence is YVALLIVMLFFIYAVIGMQVF. Residues 1413–1434 are Extracellular-facing; that stretch reads GKIALNDTTEINRNNNFQTFPQ. N-linked (GlcNAc...) asparagine glycosylation occurs at Asn1418. Residues 1435-1453 constitute an intramembrane region (pore-forming); sequence AVLLLFRCATGEAWQDIML. A Selectivity filter of repeat IV motif is present at residues 1444 to 1447; sequence TGEA. The Extracellular segment spans residues 1454-1481; that stretch reads ACMPGKKCAPESEPHNSTEGETPCGSSF. Positions 1460-1528 are dihydropyridine binding; that stretch reads KCAPESEPHN…LGPHHLDEFK (69 aa). A disulfide bridge connects residues Cys1461 and Cys1477. The N-linked (GlcNAc...) asparagine glycan is linked to Asn1469. Positions 1474 to 1516 are phenylalkylamine binding; sequence ETPCGSSFAVFYFISFYMLCAFLIINLFVAVIMDNFDYLTRDW. A helical membrane pass occupies residues 1482–1506; the sequence is AVFYFISFYMLCAFLIINLFVAVIM. Over 1507–2171 the chain is Cytoplasmic; the sequence is DNFDYLTRDW…ADRRAGVSSL (665 aa). Residues 1641-1668 form an important for interaction with STAC1, STAC2 and STAC3 region; sequence DEVTVGKFYATFLIQEYFRKFKKRKEQG. The calmodulin-binding IQ region stretch occupies residues 1647–1667; it reads KFYATFLIQEYFRKFKKRKEQ. The segment at 1681-1700 is important for localization in at the junctional membrane; the sequence is LQAGLRTLHDIGPEIRRAIS. Ser1700 and Ser1721 each carry phosphoserine. The interval 1760–1797 is disordered; it reads ISKAGNNQGDTESPSHEKLVDSTFTPSSYSSTGSNANI. Positions 1781 to 1793 are enriched in polar residues; that stretch reads STFTPSSYSSTGS. Ser1928 bears the Phosphoserine; by PKA mark. 3 disordered regions span residues 1971–2014, 2026–2060, and 2114–2155; these read RSHS…EKLN, SGEN…GRQF, and SGGA…PGCG. Positions 2130-2140 are enriched in basic and acidic residues; that stretch reads NRRDPGRDRAG.

Belongs to the calcium channel alpha-1 subunit (TC 1.A.1.11) family. CACNA1C subfamily. As to quaternary structure, component of a calcium channel complex consisting of a pore-forming alpha subunit (CACNA1C) and ancillary beta, gamma and delta subunits. The channel complex contains alpha, beta, gamma and delta subunits in a 1:1:1:1 ratio, i.e. it contains only one of each type of subunit. CACNA1C channel activity is modulated by ancillary subunits, such as CACNB1, CACNB2, CACNB3, CACNA2D1 and CACNA2D4. Interacts with CACNB1. Interacts with CACNB2. Identified in a complex with CACNA2D4 and CACNB3. Interacts with CACNB3. Interacts with CACNA2D1. Interacts with the gamma subunits CACNG4, CACNG6, CACNG7 and CACNG8. Interacts with CACNA2D4. Interacts with CALM1. Interacts (via the N-terminus and the C-terminal C and IQ motifs) with CABP1; this inhibits Ca(2+)-dependent channel inactivation. The binding via the C motif is calcium independent whereas the binding via IQ requires the presence of calcium and is mutually exclusive with calmodulin binding. The binding to the cytoplasmic N-terminal domain is calcium independent but is essential for the channel modulation. Interacts (via C-terminal CDB motif) with CABP5; in a calcium-dependent manner. Interacts with CIB1; the interaction increases upon cardiomyocytes hypertrophy. Interacts with STAC1, STAC2 and STAC3; this inhibits channel inactivation, probably by hindering CALM1 binding. Phosphorylation by PKA at Ser-1928 activates the channel. Elevated levels of blood glucose lead to increased phosphorylation by PKA. In terms of tissue distribution, expression in cardiac muscle. In lung, expressed in airway and vascular smooth muscle cells.

The protein resides in the cell membrane. It is found in the sarcolemma. Its subcellular location is the perikaryon. The protein localises to the postsynaptic density membrane. It localises to the cell projection. The protein resides in the dendrite. It is found in the T-tubule. The catalysed reaction is Ca(2+)(in) = Ca(2+)(out). Its activity is regulated as follows. Inhibited by dihydropyridines (DHP), such as isradipine. Inhibited by nifedipine. Channel activity is regulated by Ca(2+) and calmodulin. Binding of STAC1, STAC2 or STAC3 to a region that overlaps with the calmodulin binding site inhibits channel inactivation by Ca(2+) and calmodulin. Binding of calmodulin or CABP1 at the same regulatory sites results in opposite effects on the channel function. Shear stress and pressure increases calcium channel activity. Its function is as follows. Pore-forming, alpha-1C subunit of the voltage-gated calcium channel that gives rise to L-type calcium currents. Mediates influx of calcium ions into the cytoplasm, and thereby triggers calcium release from the sarcoplasm. Plays an important role in excitation-contraction coupling in the heart. Required for normal heart development and normal regulation of heart rhythm. Required for normal contraction of smooth muscle cells in blood vessels and in the intestine. Essential for normal blood pressure regulation via its role in the contraction of arterial smooth muscle cells. Long-lasting (L-type) calcium channels belong to the 'high-voltage activated' (HVA) group. The sequence is that of Voltage-dependent L-type calcium channel subunit alpha-1C (CACNA1C) from Oryctolagus cuniculus (Rabbit).